Here is a 484-residue protein sequence, read N- to C-terminus: tRNA sulfurtransferase (484 aa).

The THUMP domain occupies 61 to 165; that stretch reads PLILDLLKRT…GDKMLLVEAR (105 aa). Residues 183-184, K265, G287, and Q296 each bind ATP; that span reads LI. A disulfide bond links C344 and C456. One can recognise a Rhodanese domain in the interval 404-483; sequence LTEKDIILDI…YQNVKVFNLP (80 aa). The active-site Cysteine persulfide intermediate is C456.

Belongs to the ThiI family.

Its subcellular location is the cytoplasm. It carries out the reaction [ThiI sulfur-carrier protein]-S-sulfanyl-L-cysteine + a uridine in tRNA + 2 reduced [2Fe-2S]-[ferredoxin] + ATP + H(+) = [ThiI sulfur-carrier protein]-L-cysteine + a 4-thiouridine in tRNA + 2 oxidized [2Fe-2S]-[ferredoxin] + AMP + diphosphate. It catalyses the reaction [ThiS sulfur-carrier protein]-C-terminal Gly-Gly-AMP + S-sulfanyl-L-cysteinyl-[cysteine desulfurase] + AH2 = [ThiS sulfur-carrier protein]-C-terminal-Gly-aminoethanethioate + L-cysteinyl-[cysteine desulfurase] + A + AMP + 2 H(+). It functions in the pathway cofactor biosynthesis; thiamine diphosphate biosynthesis. Its function is as follows. Catalyzes the ATP-dependent transfer of a sulfur to tRNA to produce 4-thiouridine in position 8 of tRNAs, which functions as a near-UV photosensor. Also catalyzes the transfer of sulfur to the sulfur carrier protein ThiS, forming ThiS-thiocarboxylate. This is a step in the synthesis of thiazole, in the thiamine biosynthesis pathway. The sulfur is donated as persulfide by IscS. The sequence is that of tRNA sulfurtransferase from Haemophilus ducreyi (strain 35000HP / ATCC 700724).